The following is a 64-amino-acid chain: Non-structural protein 3b (64 aa).

This is Non-structural protein 3b from Avian infectious bronchitis virus (strain M41) (IBV).